Consider the following 358-residue polypeptide: MKKYEIAIIKGDGIGPEIVDEAKKVLDAISYSHGFELSYHDYLMGGIAVDRAGVPLPDETIEGCLRADAVLFGAIGGEKWDSLPRELRPESGLLKLRKSLEIFANLRPTVVYDELIEASTLKESVIKGVDILVVRELIGGIYFGEPKGREGDKAFNTMVYSVPEIERIAHVAFKAAMRRQKRVCSVDKANVLDVSQLWRETVTRIAKEYPEVELSHMYIDNAAMQLIRNPKQFDVILTGNLFGDILSDEASMLSGSIGLLPSASIGGKAALYEPIHGSAPDIAGQGIANPIATIASASMMLRHSLGEVEAADAIDKAIVKTLKEGYRTKDIAAFGAKEICTTDEMGSIIANYAAKKGE.

NAD(+) is bound at residue 77-90; it reads GEKWDSLPRELRPE. 4 residues coordinate substrate: Arg-97, Arg-107, Arg-135, and Asp-220. Mg(2+) contacts are provided by Asp-220, Asp-244, and Asp-248. 277–289 provides a ligand contact to NAD(+); it reads GSAPDIAGQGIAN.

Belongs to the isocitrate and isopropylmalate dehydrogenases family. LeuB type 1 subfamily. Homodimer. It depends on Mg(2+) as a cofactor. Mn(2+) is required as a cofactor.

Its subcellular location is the cytoplasm. It carries out the reaction (2R,3S)-3-isopropylmalate + NAD(+) = 4-methyl-2-oxopentanoate + CO2 + NADH. It participates in amino-acid biosynthesis; L-leucine biosynthesis; L-leucine from 3-methyl-2-oxobutanoate: step 3/4. Functionally, catalyzes the oxidation of 3-carboxy-2-hydroxy-4-methylpentanoate (3-isopropylmalate) to 3-carboxy-4-methyl-2-oxopentanoate. The product decarboxylates to 4-methyl-2 oxopentanoate. The protein is 3-isopropylmalate dehydrogenase of Wolinella succinogenes (strain ATCC 29543 / DSM 1740 / CCUG 13145 / JCM 31913 / LMG 7466 / NCTC 11488 / FDC 602W) (Vibrio succinogenes).